A 503-amino-acid polypeptide reads, in one-letter code: Intracellular exo-alpha-(1-&gt;5)-L-arabinofuranosidase (503 aa).

Positions 27, 72, and 172 each coordinate alpha-L-arabinofuranose. The active-site Proton donor/acceptor is the Glu173. Alpha-L-arabinofuranose contacts are provided by Tyr244, Glu292, and Gln352. Glu292 (nucleophile) is an active-site residue.

Belongs to the glycosyl hydrolase 51 family. In terms of assembly, homohexamer; trimer of dimers.

The protein localises to the cytoplasm. The enzyme catalyses Hydrolysis of terminal non-reducing alpha-L-arabinofuranoside residues in alpha-L-arabinosides.. It participates in glycan metabolism; L-arabinan degradation. Involved in the degradation of arabinan and is a key enzyme in the complete degradation of the plant cell wall. Catalyzes the cleavage of terminal alpha-(1-&gt;5)-arabinofuranosyl bonds in small oligosaccharides as alpha-(1-&gt;5)-linked arabinobiose/arabinotriose, but does not display significant activity against linear non-substituted arabinan. It is also highly efficient in the cleavage of alpha-(1-&gt;3)-linked arabinoside of xylobiose and of the alpha-(1-&gt;3)-linked arabinoside decorations of polymeric wheat arabinoxylan. It exhibits very low activity against sugar beet arabinan. This chain is Intracellular exo-alpha-(1-&gt;5)-L-arabinofuranosidase, found in Acetivibrio thermocellus (strain ATCC 27405 / DSM 1237 / JCM 9322 / NBRC 103400 / NCIMB 10682 / NRRL B-4536 / VPI 7372) (Clostridium thermocellum).